We begin with the raw amino-acid sequence, 192 residues long: Amelogenin, Y isoform (192 aa).

An N-terminal signal peptide occupies residues 1–16 (MGTWILFACLLGAAYS). Residues 73–192 (QSPQNHALQP…TDKTKREEVD (120 aa)) are disordered. The segment covering 87-105 (PMVPAQQPVVPQQPMMPVP) has biased composition (low complexity). A compositionally biased stretch (polar residues) spans 108-117 (HSMTPIQHHQ). Residues 132-173 (PIQPQPHQPLQPQPPVHPIQRLPPQPPLPPIFPMQPLPPVLP) show a composition bias toward pro residues.

It belongs to the amelogenin family.

It localises to the secreted. It is found in the extracellular space. The protein resides in the extracellular matrix. In terms of biological role, plays a role in the biomineralization of teeth. Seems to regulate the formation of crystallites during the secretory stage of tooth enamel development. Thought to play a major role in the structural organization and mineralization of developing enamel. The protein is Amelogenin, Y isoform (AMELY) of Bos taurus (Bovine).